We begin with the raw amino-acid sequence, 452 residues long: Phosphoglucosamine mutase (452 aa).

S112 acts as the Phosphoserine intermediate in catalysis. S112, D251, D253, and D255 together coordinate Mg(2+). Residue S112 is modified to Phosphoserine.

This sequence belongs to the phosphohexose mutase family. Requires Mg(2+) as cofactor. Activated by phosphorylation.

It carries out the reaction alpha-D-glucosamine 1-phosphate = D-glucosamine 6-phosphate. Its function is as follows. Catalyzes the conversion of glucosamine-6-phosphate to glucosamine-1-phosphate. The chain is Phosphoglucosamine mutase from Bordetella pertussis (strain Tohama I / ATCC BAA-589 / NCTC 13251).